Here is a 437-residue protein sequence, read N- to C-terminus: Serine carboxypeptidase-like 9 (437 aa).

Residues 1 to 21 (MSLILKFMLLILLVSSHHVRS) form the signal peptide. An N-linked (GlcNAc...) asparagine glycan is attached at asparagine 101. The active site involves serine 175. Intrachain disulfides connect cysteine 243/cysteine 257 and cysteine 281/cysteine 293. Residues asparagine 307 and asparagine 346 are each glycosylated (N-linked (GlcNAc...) asparagine). Aspartate 362 is an active-site residue. N-linked (GlcNAc...) asparagine glycosylation occurs at asparagine 378. The active site involves histidine 415.

It belongs to the peptidase S10 family. As to expression, expressed in seedlings, leaves, flowers and siliques.

It is found in the secreted. It catalyses the reaction 2 1-O-(trans-sinapoyl)-beta-D-glucose = 1,2-di-O-sinapoyl beta-D-glucose + D-glucose. Functionally, catalyzes the formation of 1,2-bis-O-sinapoyl beta-D-glucoside and an unidentified compound 1. In Arabidopsis thaliana (Mouse-ear cress), this protein is Serine carboxypeptidase-like 9 (SCPL9).